A 358-amino-acid chain; its full sequence is Zinc transporter ZIP1 (358 aa).

Over 1–7 (MDLLFAK) the chain is Extracellular. Residues 8–28 (IICIGIFLVVTTFGCFIPHLM) form a helical membrane-spanning segment. Residues 29–53 (GLYKEKENEEKNKRVKNILSNLNCF) are Cytoplasmic-facing. The helical transmembrane segment at 54-74 (GSGFIFSIIMFHLLPETIHII) threads the bilayer. The Extracellular portion of the chain corresponds to 75-91 (SDHGNIRIFNTSDSQMK). The helical transmembrane segment at 92–112 (ILYIFFFVFIGFCMQLGLEYV) threads the bilayer. Residues 113–186 (LPVDTNICCV…GKFLEILTLQ (74 aa)) lie on the Cytoplasmic side of the membrane. A helical membrane pass occupies residues 187 to 207 (SFFLTISLAIHSCIEGMIIGT). The Extracellular portion of the chain corresponds to 208–213 (STDVNY). A helical membrane pass occupies residues 214 to 234 (VFISSFCILLHKWIAGVTVSL). Topologically, residues 235–246 (SLNSNNMNKTLK) are cytoplasmic. The chain crosses the membrane as a helical span at residues 247–267 (AILLLTFVFASPLGIVLGHMA). The Extracellular segment spans residues 268 to 273 (KSAGQK). Residues 274-294 (VTCLINAVSIGTLLFIGCEIL) form a helical membrane-spanning segment. The Cytoplasmic segment spans residues 295–310 (LNEIKQNISRKVRLCK). The chain crosses the membrane as a helical span at residues 311-331 (WLSFCFSCLIAFALISFTTSM). Over 332-358 (APHTHGDIDTHVHVHHHDHDHDHGHNH) the chain is Extracellular.

Belongs to the ZIP transporter (TC 2.A.5) family. As to quaternary structure, homodimer.

The protein localises to the plastid. Its subcellular location is the apicoplast. The protein resides in the cell membrane. It catalyses the reaction Zn(2+)(in) = Zn(2+)(out). The catalysed reaction is Fe(2+)(in) = Fe(2+)(out). Functionally, transporter for the divalent zinc cation. Mediates the influx of zinc into cells from extracellular space. Can transport divalent iron ions. Does not transport manganese and cadmium cations. The chain is Zinc transporter ZIP1 from Plasmodium falciparum (isolate 3D7).